A 692-amino-acid polypeptide reads, in one-letter code: Eomesodermin (692 aa).

The disordered stretch occupies residues 35–135 (NSSTPNLPHT…LNTAVPTSAP (101 aa)). Residues 263-443 (LWLKFHRHQT…HNPFAKGFRD (181 aa)) constitute a DNA-binding region (T-box). A required for transcription activation region spans residues 578–692 (SMAGWGSRGS…LGYYSFYSSS (115 aa)). Disordered regions lie at residues 595–614 (TSLP…DLLP) and 621–673 (EMSS…DIGT). 2 stretches are compositionally biased toward low complexity: residues 596–609 (SLPW…SGFS) and 654–665 (SPSTSSNENSPP).

The protein resides in the nucleus. Functionally, functions as a transcriptional activator playing a crucial role during development. Functions in gastrulation, regulating mesoderm differentiation. Activates wnt8, t/bra, chrd and mix-A/mix.1 expression. In Xenopus laevis (African clawed frog), this protein is Eomesodermin (eomes).